A 356-amino-acid polypeptide reads, in one-letter code: uncharacterized protein (356 aa).

A helical membrane pass occupies residues 8–28 (ILGFVLFVLGAAIFLTEVMHS).

The protein to C.elegans C41C4.1 and C18B2.1.

It is found in the membrane. This is an uncharacterized protein from Caenorhabditis elegans.